A 330-amino-acid chain; its full sequence is Uracil-DNA glycosylase, mitochondrial (330 aa).

Residues 1-49 (MASSTPKTLMDFFQPAKRLKASPSSSSFPAVSVAGGSRDLGSVANSPPR) constitute a mitochondrion transit peptide. Residue aspartate 173 is the Proton acceptor of the active site.

It belongs to the uracil-DNA glycosylase (UDG) superfamily. UNG family.

Its subcellular location is the mitochondrion. It carries out the reaction Hydrolyzes single-stranded DNA or mismatched double-stranded DNA and polynucleotides, releasing free uracil.. Inhidited by the small peptide uracil-DNA-glycosylase inhibitor (Ugi). In terms of biological role, excises uracil residues from the DNA which can arise as a result of misincorporation of dUMP residues by DNA polymerase or due to deamination of cytosine. More active on U:G, U:T and U:C mispairs than on U:A pairs. Highly specific for uracil and no activity with 5-substituted uracil or cytosine derivatives. Required for initiation of base excision repair (BER) of uracil. The protein is Uracil-DNA glycosylase, mitochondrial of Arabidopsis thaliana (Mouse-ear cress).